Consider the following 140-residue polypeptide: Non-specific lipid transfer protein GPI-anchored 33 (140 aa).

A signal peptide spans 1-27 (MAYTNKVTISAAVATMMLFLAVTIVDA). Cystine bridges form between Cys40/Cys80, Cys52/Cys64, Cys65/Cys104, and Cys78/Cys112. Asn91 is a glycosylation site (N-linked (GlcNAc...) asparagine). Gly115 is lipidated: GPI-anchor amidated glycine. Positions 116 to 140 (DASGGSTNKIAASMVLLGLVASLFF) are cleaved as a propeptide — removed in mature form.

It belongs to the plant LTP family.

The protein localises to the cell membrane. Its function is as follows. Probable lipid transfer protein. The polypeptide is Non-specific lipid transfer protein GPI-anchored 33 (Arabidopsis thaliana (Mouse-ear cress)).